The chain runs to 394 residues: Phosphoglycerate kinase (394 aa).

Substrate-binding positions include 21–23, Arg-36, 59–62, Arg-118, and Arg-151; these read DFN and HLGR. Ser-183 bears the Phosphoserine mark. Residues Lys-201 and Gly-292 each contribute to the ATP site. Thr-299 bears the Phosphothreonine mark. Residues Glu-323 and 350 to 353 each bind ATP; that span reads GGDS.

The protein belongs to the phosphoglycerate kinase family. In terms of assembly, monomer.

The protein resides in the cytoplasm. It carries out the reaction (2R)-3-phosphoglycerate + ATP = (2R)-3-phospho-glyceroyl phosphate + ADP. Its pathway is carbohydrate degradation; glycolysis; pyruvate from D-glyceraldehyde 3-phosphate: step 2/5. In Bacillus mycoides (strain KBAB4) (Bacillus weihenstephanensis), this protein is Phosphoglycerate kinase.